We begin with the raw amino-acid sequence, 133 residues long: Small ribosomal subunit protein uS11 (133 aa).

Belongs to the universal ribosomal protein uS11 family. As to quaternary structure, part of the 30S ribosomal subunit. Interacts with proteins S7 and S18. Binds to IF-3.

In terms of biological role, located on the platform of the 30S subunit, it bridges several disparate RNA helices of the 16S rRNA. Forms part of the Shine-Dalgarno cleft in the 70S ribosome. This chain is Small ribosomal subunit protein uS11, found in Chlamydia pneumoniae (Chlamydophila pneumoniae).